We begin with the raw amino-acid sequence, 355 residues long: Glutamine synthetase root isozyme 4 (355 aa).

The GS beta-grasp domain maps to 19–99 (IIAEYIWIGG…VMCDCYTPAG (81 aa)). Residues 37–66 (ARTLPGPVTDPSKLPKWNYDGSSTGQAPGE) form a disordered region. A GS catalytic domain is found at 106 to 355 (KRYSAAKIFS…IAETTIVWKP (250 aa)).

It belongs to the glutamine synthetase family. Homooctamer. Found in all the tissues examined with higher expression found in tissues of the root, stem and seedling shoot.

Its subcellular location is the cytoplasm. The enzyme catalyses L-glutamate + NH4(+) + ATP = L-glutamine + ADP + phosphate + H(+). Functionally, plays a role in the flow of nitrogen into nitrogenous organic compounds. The sequence is that of Glutamine synthetase root isozyme 4 (GLN5) from Zea mays (Maize).